We begin with the raw amino-acid sequence, 577 residues long: Hemagglutinin-neuraminidase (577 aa).

Residues methionine 1–arginine 26 are Intravirion-facing. Residues isoleucine 27–serine 47 traverse the membrane as a helical segment. Residues methionine 48–glycine 577 lie on the Virion surface side of the membrane. The segment at glycine 124–tyrosine 152 is important for interaction with fusion/F protein. Asparagine 341, asparagine 433, asparagine 481, and asparagine 538 each carry an N-linked (GlcNAc...) asparagine; by host glycan.

The protein belongs to the paramyxoviruses hemagglutinin-neuraminidase family. As to quaternary structure, homotetramer; composed of disulfide-linked homodimers. Interacts with F protein trimer. Interacts with host CG-1B; this interaction inhibits viral adsorption and replication rather than internalization.

It localises to the virion membrane. Its subcellular location is the host cell membrane. It catalyses the reaction Hydrolysis of alpha-(2-&gt;3)-, alpha-(2-&gt;6)-, alpha-(2-&gt;8)- glycosidic linkages of terminal sialic acid residues in oligosaccharides, glycoproteins, glycolipids, colominic acid and synthetic substrates.. Functionally, mediates the viral entry into the host cell together with fusion/F protein. Attaches the virus to sialic acid-containing cell receptors and thereby initiates infection. Binding of HN protein to the receptor induces a conformational change that allows the F protein to trigger virion/cell membranes fusion. Neuraminidase activity ensures the efficient spread of the virus by dissociating the mature virions from the neuraminic acid containing glycoproteins. This Gallus gallus (Chicken) protein is Hemagglutinin-neuraminidase (HN).